Here is a 225-residue protein sequence, read N- to C-terminus: Ribose-5-phosphate isomerase A (225 aa).

Substrate contacts are provided by residues 27–30, 82–85, and 95–98; these read SGST, DGAD, and KGGG. Glu104 acts as the Proton acceptor in catalysis. Lys122 provides a ligand contact to substrate.

Belongs to the ribose 5-phosphate isomerase family. In terms of assembly, homodimer.

It carries out the reaction aldehydo-D-ribose 5-phosphate = D-ribulose 5-phosphate. The protein operates within carbohydrate degradation; pentose phosphate pathway; D-ribose 5-phosphate from D-ribulose 5-phosphate (non-oxidative stage): step 1/1. Functionally, catalyzes the reversible conversion of ribose-5-phosphate to ribulose 5-phosphate. The sequence is that of Ribose-5-phosphate isomerase A from Archaeoglobus fulgidus (strain ATCC 49558 / DSM 4304 / JCM 9628 / NBRC 100126 / VC-16).